We begin with the raw amino-acid sequence, 193 residues long: Phosphoheptose isomerase (193 aa).

The 157-residue stretch at 37 to 193 folds into the SIS domain; it reads LADSFKAGGK…MLIEKEMAKG (157 aa). 52–54 is a binding site for substrate; sequence NGG. Residues H61 and E65 each contribute to the Zn(2+) site. Substrate contacts are provided by residues E65, 93–94, 119–121, S124, and Q172; these read ND and STS. Zn(2+) is bound by residues Q172 and H180.

It belongs to the SIS family. GmhA subfamily. As to quaternary structure, homotetramer. The cofactor is Zn(2+).

The protein localises to the cytoplasm. The catalysed reaction is 2 D-sedoheptulose 7-phosphate = D-glycero-alpha-D-manno-heptose 7-phosphate + D-glycero-beta-D-manno-heptose 7-phosphate. Its pathway is carbohydrate biosynthesis; D-glycero-D-manno-heptose 7-phosphate biosynthesis; D-glycero-alpha-D-manno-heptose 7-phosphate and D-glycero-beta-D-manno-heptose 7-phosphate from sedoheptulose 7-phosphate: step 1/1. Functionally, catalyzes the isomerization of sedoheptulose 7-phosphate in D-glycero-D-manno-heptose 7-phosphate. This Klebsiella pneumoniae subsp. pneumoniae (strain ATCC 700721 / MGH 78578) protein is Phosphoheptose isomerase.